Consider the following 98-residue polypeptide: Protein S100-A13 (98 aa).

Residues 18–53 (TTFFTFAGREGRKGSLSVNEFKELVTQQLPHLLKDV) form the EF-hand domain. Positions 32, 37, 64, 66, 68, 70, and 75 each coordinate Ca(2+). Residue Ser-32 is modified to Phosphoserine.

Belongs to the S-100 family. As to quaternary structure, homodimer. Part of a copper-dependent multiprotein complex containing S100A13, FGF1 and SYT1. Interacts with FGF1 and SYT1. Interacts with IL1A.

It localises to the cytoplasm. The protein resides in the secreted. Its function is as follows. Plays a role in the export of proteins that lack a signal peptide and are secreted by an alternative pathway. Binds two calcium ions per subunit. Binds one copper ion. Binding of one copper ion does not interfere with calcium binding. Required for the copper-dependent stress-induced export of IL1A and FGF1. The calcium-free protein binds to lipid vesicles containing phosphatidylserine, but not to vesicles containing phosphatidylcholine. In Bos taurus (Bovine), this protein is Protein S100-A13 (S100A13).